An 88-amino-acid chain; its full sequence is Small ribosomal subunit protein bS20 (88 aa).

Disordered regions lie at residues 1–29 (MANT…SKLR) and 69–88 (KNTA…AMAA).

It belongs to the bacterial ribosomal protein bS20 family.

Its function is as follows. Binds directly to 16S ribosomal RNA. In Polynucleobacter asymbioticus (strain DSM 18221 / CIP 109841 / QLW-P1DMWA-1) (Polynucleobacter necessarius subsp. asymbioticus), this protein is Small ribosomal subunit protein bS20.